Consider the following 553-residue polypeptide: Heterochromatin protein 1-binding protein 3 (553 aa).

Ala2 carries the post-translational modification N-acetylalanine. Ser6 carries the phosphoserine modification. Disordered stretches follow at residues 29 to 134 (KLGE…KTIP) and 140 to 159 (SASQ…SPRP). Thr51 is subject to Phosphothreonine. Residues 60 to 71 (GEEEKPEPDISS) show a composition bias toward acidic residues. Lys64 is covalently cross-linked (Glycyl lysine isopeptide (Lys-Gly) (interchain with G-Cter in SUMO2)). Thr85 bears the Phosphothreonine mark. A compositionally biased stretch (basic and acidic residues) spans 94–127 (EQPKGEPENEEKEENKSSEETKKDEKDQSKEKEK). Residue Lys97 forms a Glycyl lysine isopeptide (Lys-Gly) (interchain with G-Cter in SUMO2) linkage. A compositionally biased stretch (polar residues) spans 140-154 (SASQLARAQKQTPMA). Phosphoserine occurs at positions 142, 155, and 156. Residues 157 to 232 (PRPKMDAILT…GASGSFVVVQ (76 aa)) form the H15 1 domain. The residue at position 190 (Lys190) is an N6-acetyllysine. The tract at residues 230–255 (VVQKSRKTPQKSRNRKNRSSAVDPEP) is disordered. The segment covering 233–247 (KSRKTPQKSRNRKNR) has biased composition (basic residues). Phosphoserine is present on residues Ser248 and Ser249. A PxVxL motif motif is present at residues 255–259 (PQVKL). 2 H15 domains span residues 255 to 330 (PQVK…QLKK) and 337 to 413 (LGGS…QLCF). Residue Lys258 forms a Glycyl lysine isopeptide (Lys-Gly) (interchain with G-Cter in SUMO2) linkage. A disordered region spans residues 422–553 (LFPKKEPDDS…TMKKSFRVKK (132 aa)). A compositionally biased stretch (acidic residues) spans 430 to 450 (DSRDEDEDEDESSEEDSEDEE). Residues Ser441, Ser442, and Ser446 each carry the phosphoserine modification. The span at 489–510 (GKARPLPKKAPPKAKTPAKKTR) shows a compositional bias: basic residues. Residues 517–527 (KKPSGGSSKKP) show a composition bias toward low complexity. Over residues 543–553 (STMKKSFRVKK) the composition is skewed to basic residues.

As to quaternary structure, interacts (via PxVxL motif) with CBX5 (via Trp-174).

It localises to the nucleus. The protein localises to the chromosome. Functionally, component of heterochromatin that maintains heterochromatin integrity during G1/S progression and regulates the duration of G1 phase to critically influence cell proliferative capacity. Mediates chromatin condensation during hypoxia, leading to increased tumor cell viability, radio-resistance, chemo-resistance and self-renewal. The protein is Heterochromatin protein 1-binding protein 3 (HP1BP3) of Homo sapiens (Human).